A 268-amino-acid chain; its full sequence is uncharacterized protein (268 aa).

The protein belongs to the glycosyltransferase 2 family.

This is an uncharacterized protein from Bacillus subtilis (strain 168).